We begin with the raw amino-acid sequence, 395 residues long: Putative 8-amino-7-oxononanoate synthase (395 aa).

Arg-23 provides a ligand contact to substrate. 110-111 (GY) lines the pyridoxal 5'-phosphate pocket. His-135 contacts substrate. Pyridoxal 5'-phosphate is bound by residues Ser-182, 207–210 (DEAH), and 239–242 (TFSK). Position 242 is an N6-(pyridoxal phosphate)lysine (Lys-242). Thr-356 is a substrate binding site.

This sequence belongs to the class-II pyridoxal-phosphate-dependent aminotransferase family. BioF subfamily. As to quaternary structure, homodimer. Pyridoxal 5'-phosphate is required as a cofactor.

The enzyme catalyses 6-carboxyhexanoyl-[ACP] + L-alanine + H(+) = (8S)-8-amino-7-oxononanoate + holo-[ACP] + CO2. The protein operates within cofactor biosynthesis; biotin biosynthesis. Catalyzes the decarboxylative condensation of pimeloyl-[acyl-carrier protein] and L-alanine to produce 8-amino-7-oxononanoate (AON), [acyl-carrier protein], and carbon dioxide. The protein is Putative 8-amino-7-oxononanoate synthase (bioF) of Bacillus cereus (strain ATCC 10987 / NRS 248).